Here is a 237-residue protein sequence, read N- to C-terminus: Ribosomal RNA small subunit methyltransferase G (237 aa).

S-adenosyl-L-methionine contacts are provided by residues Gly78, Phe83, 129–130, and Arg148; that span reads AE.

It belongs to the methyltransferase superfamily. RNA methyltransferase RsmG family.

Its subcellular location is the cytoplasm. In terms of biological role, specifically methylates the N7 position of a guanine in 16S rRNA. The sequence is that of Ribosomal RNA small subunit methyltransferase G from Streptococcus pyogenes serotype M12 (strain MGAS2096).